Consider the following 201-residue polypeptide: FMN-dependent NADH:quinone oxidoreductase (201 aa).

FMN contacts are provided by residues Ser-9, 16 to 18 (SVS), and 93 to 96 (MYNF).

Belongs to the azoreductase type 1 family. In terms of assembly, homodimer. It depends on FMN as a cofactor.

The catalysed reaction is 2 a quinone + NADH + H(+) = 2 a 1,4-benzosemiquinone + NAD(+). It catalyses the reaction N,N-dimethyl-1,4-phenylenediamine + anthranilate + 2 NAD(+) = 2-(4-dimethylaminophenyl)diazenylbenzoate + 2 NADH + 2 H(+). Functionally, quinone reductase that provides resistance to thiol-specific stress caused by electrophilic quinones. Its function is as follows. Also exhibits azoreductase activity. Catalyzes the reductive cleavage of the azo bond in aromatic azo compounds to the corresponding amines. In Gluconacetobacter diazotrophicus (strain ATCC 49037 / DSM 5601 / CCUG 37298 / CIP 103539 / LMG 7603 / PAl5), this protein is FMN-dependent NADH:quinone oxidoreductase.